Here is a 929-residue protein sequence, read N- to C-terminus: Protocadherin gamma-B7 (929 aa).

The first 30 residues, 1 to 30, serve as a signal peptide directing secretion; that stretch reads MGGSCAQRRRAGPRQVLFPLLLPLFYPTLC. Cadherin domains lie at 31-133, 134-242, 243-347, 348-452, 453-562, and 570-675; these read EPIR…APQF, QKDE…PPVF, SQDV…SPEI, IITS…APVF, GQSA…APRV, and DGSA…LPDF. Residues 31-691 lie on the Extracellular side of the membrane; it reads EPIRYSIPEE…SDSQAEMQFY (661 aa). Asparagine 419 and asparagine 545 each carry an N-linked (GlcNAc...) asparagine glycan. A helical membrane pass occupies residues 692–712; it reads LVVALALISVLFLLAVILAIA. At 713–929 the chain is on the cytoplasmic side; it reads LRLRQSFSPT…KKKSGKKEKK (217 aa). Disordered regions lie at residues 806 to 838 and 899 to 929; these read QAPPNTDWRFSQAQRPGTSGSQNGDDTGTWPNN and ATLTNAAGKRDGKAPAGGNGNKKKSGKKEKK. Positions 807-838 are enriched in polar residues; the sequence is APPNTDWRFSQAQRPGTSGSQNGDDTGTWPNN. Positions 919 to 929 are enriched in basic residues; it reads NKKKSGKKEKK.

It is found in the cell membrane. Its function is as follows. Potential calcium-dependent cell-adhesion protein. May be involved in the establishment and maintenance of specific neuronal connections in the brain. In Pan troglodytes (Chimpanzee), this protein is Protocadherin gamma-B7 (PCDHGB7).